The chain runs to 834 residues: ATP-dependent RNA helicase ddx23 (834 aa).

Disordered stretches follow at residues 1–245 and 322–371; these read MDPP…TQFS and FGGY…GKQI. A compositionally biased stretch (basic and acidic residues) spans 10–25; that stretch reads SKRDTKKKDEVNKEQP. Residues 42-54 show a composition bias toward polar residues; sequence SNPTQEEPTNTLQ. 4 stretches are compositionally biased toward basic and acidic residues: residues 70 to 110, 117 to 164, 171 to 205, and 231 to 245; these read GLKE…DYRD, GRDR…RRDG, RRRDERRENSGRRDYRDNDRRDDRRDNGRYGRDND, and DIHKDRIKRDTTQFS. Over residues 328–362 the composition is skewed to low complexity; it reads NNNNNGNHYNGNIYNNNNNNNNNNNNNNNINNNNN. The Q motif signature appears at 413–441; it reads RTWQESNLPREILEAIRQLGYEKPSPIQM. The Helicase ATP-binding domain occupies 444–643; that stretch reads IPISLTGRDI…KKYLRRPCTI (200 aa). 457-464 provides a ligand contact to ATP; sequence AETGSGKT. Positions 570-573 match the DEAD box motif; the sequence is DEAD. The 162-residue stretch at 654 to 815 folds into the Helicase C-terminal domain; it reads RIRQTVIFVK…IVPIELLKHP (162 aa). Residues 813-834 form a disordered region; it reads KHPSSQQKHGSSKDHNKSVIFK. Over residues 823 to 834 the composition is skewed to basic and acidic residues; the sequence is SSKDHNKSVIFK.

It belongs to the DEAD box helicase family. DDX23/PRP28 subfamily.

It is found in the cytoplasm. It localises to the nucleus. The enzyme catalyses ATP + H2O = ADP + phosphate + H(+). In terms of biological role, probable ATP-dependent RNA helicase which may be involved in mRNA splicing. This Dictyostelium discoideum (Social amoeba) protein is ATP-dependent RNA helicase ddx23 (helB2).